The sequence spans 867 residues: DNA mismatch repair protein MutS (867 aa).

An ATP-binding site is contributed by 609–616 (GPNMSGKS).

The protein belongs to the DNA mismatch repair MutS family.

In terms of biological role, this protein is involved in the repair of mismatches in DNA. It is possible that it carries out the mismatch recognition step. This protein has a weak ATPase activity. The protein is DNA mismatch repair protein MutS of Latilactobacillus sakei subsp. sakei (strain 23K) (Lactobacillus sakei subsp. sakei).